The sequence spans 1036 residues: Mitogen-activated protein kinase kinase kinase 21 (1036 aa).

Residues 1 to 36 (MALRGAAGATDTPVSSAGGAPGGSASSSSTSSGGSA) form a disordered region. Over residues 15 to 36 (SSAGGAPGGSASSSSTSSGGSA) the composition is skewed to low complexity. In terms of domain architecture, SH3 spans 38–102 (AGAGLWAALY…PANYVAPCRP (65 aa)). One can recognise a Protein kinase domain in the interval 124–401 (LELKELIGAG…ALILEQLTAI (278 aa)). Residues 130–138 (IGAGGFGQV) and Lys-151 each bind ATP. The active-site Proton acceptor is the Asp-263. Thr-299 bears the Phosphothreonine; by autocatalysis mark. Phosphoserine; by autocatalysis and MAP4K1 is present on Ser-303. Leucine-zipper regions lie at residues 425-446 (IQQM…EEEL) and 460-481 (LKRR…ELNI). The tract at residues 517–551 (SDFQHKITVQASPNLDKRRSLNSSSSSPPSSPTMM) is disordered. A phosphoserine mark is found at Ser-528, Ser-543, and Ser-547. Thr-592 is modified (phosphothreonine). Ser-614 carries the post-translational modification Phosphoserine. A compositionally biased stretch (basic and acidic residues) spans 748-763 (AEEPLPKEEKKKREGI). 2 disordered regions span residues 748-791 (AEEP…SSPP) and 923-954 (PHSH…RSRS).

The protein belongs to the protein kinase superfamily. STE Ser/Thr protein kinase family. MAP kinase kinase kinase subfamily. In terms of assembly, homodimer. Interacts with TLR4. It depends on Mg(2+) as a cofactor. Post-translationally, autophosphorylation on serine and threonine residues within the activation loop plays a role in enzyme activation.

It catalyses the reaction L-seryl-[protein] + ATP = O-phospho-L-seryl-[protein] + ADP + H(+). It carries out the reaction L-threonyl-[protein] + ATP = O-phospho-L-threonyl-[protein] + ADP + H(+). Its activity is regulated as follows. Homodimerization via the leucine zipper domains is required for autophosphorylation and subsequent activation. Functionally, negative regulator of TLR4 signaling. Does not activate JNK1/MAPK8 pathway, p38/MAPK14, nor ERK2/MAPK1 pathways. In Homo sapiens (Human), this protein is Mitogen-activated protein kinase kinase kinase 21.